The following is a 255-amino-acid chain: Glutamate racemase (255 aa).

Substrate contacts are provided by residues 7–8 and 39–40; these read DS and YG. Cys70 acts as the Proton donor/acceptor in catalysis. Substrate is bound at residue 71-72; sequence NT. Cys181 functions as the Proton donor/acceptor in the catalytic mechanism. 182-183 is a binding site for substrate; sequence TH.

This sequence belongs to the aspartate/glutamate racemases family. In terms of assembly, homodimer.

It catalyses the reaction L-glutamate = D-glutamate. It functions in the pathway cell wall biogenesis; peptidoglycan biosynthesis. Provides the (R)-glutamate required for cell wall biosynthesis. In Helicobacter pylori (strain J99 / ATCC 700824) (Campylobacter pylori J99), this protein is Glutamate racemase.